The sequence spans 182 residues: Putative manganese efflux pump MntP (182 aa).

6 helical membrane passes run 6-26 (LIPL…VSLG), 37-57 (ILYI…IGMV), 71-91 (HFAG…SSIL), 101-121 (IGIS…SVGL), 131-151 (IITI…GLFI), and 162-182 (YGEI…LFPI).

This sequence belongs to the MntP (TC 9.B.29) family.

The protein localises to the cell membrane. Functionally, probably functions as a manganese efflux pump. This Bacillus thuringiensis subsp. konkukian (strain 97-27) protein is Putative manganese efflux pump MntP.